A 272-amino-acid chain; its full sequence is Putative phosphatase HI_0597 (272 aa).

D11 (nucleophile) is an active-site residue. D11 contacts Mg(2+). L12 contributes to the phosphate binding site. Residue D13 participates in Mg(2+) binding. Phosphate is bound by residues T45–G46 and K195. D218 is a binding site for Mg(2+). Residue N221 participates in phosphate binding.

This sequence belongs to the HAD-like hydrolase superfamily. Cof family. Requires Mg(2+) as cofactor.

This Haemophilus influenzae (strain ATCC 51907 / DSM 11121 / KW20 / Rd) protein is Putative phosphatase HI_0597.